A 711-amino-acid polypeptide reads, in one-letter code: 1,4-alpha-glucan branching enzyme GlgB (711 aa).

The active-site Nucleophile is the aspartate 392. Glutamate 443 (proton donor) is an active-site residue.

This sequence belongs to the glycosyl hydrolase 13 family. GlgB subfamily. In terms of assembly, monomer.

The enzyme catalyses Transfers a segment of a (1-&gt;4)-alpha-D-glucan chain to a primary hydroxy group in a similar glucan chain.. The protein operates within glycan biosynthesis; glycogen biosynthesis. Catalyzes the formation of the alpha-1,6-glucosidic linkages in glycogen by scission of a 1,4-alpha-linked oligosaccharide from growing alpha-1,4-glucan chains and the subsequent attachment of the oligosaccharide to the alpha-1,6 position. The sequence is that of 1,4-alpha-glucan branching enzyme GlgB from Corynebacterium jeikeium (strain K411).